Reading from the N-terminus, the 104-residue chain is Ycf49-like protein (104 aa).

3 helical membrane-spanning segments follow: residues 6 to 26 (IPTW…IALV), 41 to 61 (LAWG…WHFF), and 73 to 93 (LQAL…WWIY).

This sequence belongs to the ycf49 family.

Its subcellular location is the cell membrane. This is Ycf49-like protein from Synechocystis sp. (strain ATCC 27184 / PCC 6803 / Kazusa).